A 234-amino-acid polypeptide reads, in one-letter code: Phosphoglycolate phosphatase (234 aa).

The active-site Nucleophile is Asp15. Positions 15, 17, and 177 each coordinate Mg(2+).

The protein belongs to the HAD-like hydrolase superfamily. CbbY/CbbZ/Gph/YieH family. In terms of assembly, monomer. The cofactor is Mg(2+). Chloride is required as a cofactor.

The catalysed reaction is 2-phosphoglycolate + H2O = glycolate + phosphate. Its pathway is organic acid metabolism; glycolate biosynthesis; glycolate from 2-phosphoglycolate: step 1/1. Specifically catalyzes the dephosphorylation of 2-phosphoglycolate. Is involved in the dissimilation of the intracellular 2-phosphoglycolate formed during the DNA repair of 3'-phosphoglycolate ends, a major class of DNA lesions induced by oxidative stress. This chain is Phosphoglycolate phosphatase, found in Photorhabdus laumondii subsp. laumondii (strain DSM 15139 / CIP 105565 / TT01) (Photorhabdus luminescens subsp. laumondii).